The chain runs to 119 residues: NADH-quinone oxidoreductase subunit A (119 aa).

3 helical membrane passes run 7–27 (FPVLIFIIFGVVLGIALMSIG), 63–83 (LIAILFILFDLETAFLFPWGV), and 88–108 (IGWPGFIAMGVFLLEFIVGFV).

It belongs to the complex I subunit 3 family. As to quaternary structure, NDH-1 is composed of 14 different subunits. Subunits NuoA, H, J, K, L, M, N constitute the membrane sector of the complex.

The protein resides in the cell inner membrane. It catalyses the reaction a quinone + NADH + 5 H(+)(in) = a quinol + NAD(+) + 4 H(+)(out). In terms of biological role, NDH-1 shuttles electrons from NADH, via FMN and iron-sulfur (Fe-S) centers, to quinones in the respiratory chain. The immediate electron acceptor for the enzyme in this species is believed to be ubiquinone. Couples the redox reaction to proton translocation (for every two electrons transferred, four hydrogen ions are translocated across the cytoplasmic membrane), and thus conserves the redox energy in a proton gradient. The chain is NADH-quinone oxidoreductase subunit A from Cupriavidus pinatubonensis (strain JMP 134 / LMG 1197) (Cupriavidus necator (strain JMP 134)).